We begin with the raw amino-acid sequence, 406 residues long: 5-methylthioadenosine/S-adenosylhomocysteine deaminase (406 aa).

Zn(2+)-binding residues include histidine 55 and histidine 57. Substrate-binding residues include glutamate 84, arginine 136, arginine 148, and histidine 173. Position 200 (histidine 200) interacts with Zn(2+). Glutamate 203 and aspartate 279 together coordinate substrate. Zn(2+) is bound at residue aspartate 279.

The protein belongs to the metallo-dependent hydrolases superfamily. MTA/SAH deaminase family. Requires Zn(2+) as cofactor.

It catalyses the reaction S-adenosyl-L-homocysteine + H2O + H(+) = S-inosyl-L-homocysteine + NH4(+). The enzyme catalyses S-methyl-5'-thioadenosine + H2O + H(+) = S-methyl-5'-thioinosine + NH4(+). Catalyzes the deamination of 5-methylthioadenosine and S-adenosyl-L-homocysteine into 5-methylthioinosine and S-inosyl-L-homocysteine, respectively. Is also able to deaminate adenosine. Adenosine-5-monophosphate (AMP) and S-adenosyl-L-methionine (SAM) are not enzyme substrates. The protein is 5-methylthioadenosine/S-adenosylhomocysteine deaminase (mtaD) of Thermotoga maritima (strain ATCC 43589 / DSM 3109 / JCM 10099 / NBRC 100826 / MSB8).